Here is a 545-residue protein sequence, read N- to C-terminus: Chaperonin GroEL (545 aa).

Residues 29–32, Lys50, 86–90, Gly414, 477–479, and Asp493 contribute to the ATP site; these read TMGP, DGTTT, and DAA.

Belongs to the chaperonin (HSP60) family. As to quaternary structure, forms a cylinder of 14 subunits composed of two heptameric rings stacked back-to-back. Interacts with the co-chaperonin GroES.

The protein resides in the cytoplasm. The enzyme catalyses ATP + H2O + a folded polypeptide = ADP + phosphate + an unfolded polypeptide.. Functionally, together with its co-chaperonin GroES, plays an essential role in assisting protein folding. The GroEL-GroES system forms a nano-cage that allows encapsulation of the non-native substrate proteins and provides a physical environment optimized to promote and accelerate protein folding. The sequence is that of Chaperonin GroEL from Campylobacter jejuni subsp. jejuni serotype O:2 (strain ATCC 700819 / NCTC 11168).